Here is a 684-residue protein sequence, read N- to C-terminus: Threonine--tRNA ligase (684 aa).

Residues 1–64 enclose the TGS domain; it reads MTAPNPSSLV…ESDTEVEPVA (64 aa). The catalytic stretch occupies residues 261 to 567; sequence DHRKLGVELD…LTEHYAGAFP (307 aa). Residues C366, H417, and H544 each coordinate Zn(2+).

This sequence belongs to the class-II aminoacyl-tRNA synthetase family. In terms of assembly, homodimer. Zn(2+) is required as a cofactor.

Its subcellular location is the cytoplasm. The enzyme catalyses tRNA(Thr) + L-threonine + ATP = L-threonyl-tRNA(Thr) + AMP + diphosphate + H(+). Functionally, catalyzes the attachment of threonine to tRNA(Thr) in a two-step reaction: L-threonine is first activated by ATP to form Thr-AMP and then transferred to the acceptor end of tRNA(Thr). Also edits incorrectly charged L-seryl-tRNA(Thr). The protein is Threonine--tRNA ligase of Mycobacteroides abscessus (strain ATCC 19977 / DSM 44196 / CCUG 20993 / CIP 104536 / JCM 13569 / NCTC 13031 / TMC 1543 / L948) (Mycobacterium abscessus).